Here is a 273-residue protein sequence, read N- to C-terminus: 4-hydroxy-tetrahydrodipicolinate reductase (273 aa).

NAD(+)-binding positions include 8–13 (GACGRM), glutamate 34, 102–104 (GTT), and 128–131 (APNM). Residue histidine 160 is the Proton donor/acceptor of the active site. Histidine 161 is a binding site for (S)-2,3,4,5-tetrahydrodipicolinate. Catalysis depends on lysine 164, which acts as the Proton donor. 170–171 (GT) contributes to the (S)-2,3,4,5-tetrahydrodipicolinate binding site.

Belongs to the DapB family.

Its subcellular location is the cytoplasm. The catalysed reaction is (S)-2,3,4,5-tetrahydrodipicolinate + NAD(+) + H2O = (2S,4S)-4-hydroxy-2,3,4,5-tetrahydrodipicolinate + NADH + H(+). It carries out the reaction (S)-2,3,4,5-tetrahydrodipicolinate + NADP(+) + H2O = (2S,4S)-4-hydroxy-2,3,4,5-tetrahydrodipicolinate + NADPH + H(+). It participates in amino-acid biosynthesis; L-lysine biosynthesis via DAP pathway; (S)-tetrahydrodipicolinate from L-aspartate: step 4/4. In terms of biological role, catalyzes the conversion of 4-hydroxy-tetrahydrodipicolinate (HTPA) to tetrahydrodipicolinate. This is 4-hydroxy-tetrahydrodipicolinate reductase from Methanothermobacter thermautotrophicus (strain ATCC 29096 / DSM 1053 / JCM 10044 / NBRC 100330 / Delta H) (Methanobacterium thermoautotrophicum).